A 145-amino-acid polypeptide reads, in one-letter code: DNA polymerase epsilon subunit 3 (145 aa).

Ala-2 carries the post-translational modification N-acetylalanine. Thr-83 carries the phosphothreonine modification. Residues 85 to 144 (LKEALEAYRREQKGKKEASEQKKKDKDKKDCEEQDKSREEEDEDEERLDEEEQNEEEEVD) are a coiled coil. Positions 93–123 (RREQKGKKEASEQKKKDKDKKDCEEQDKSRE) are enriched in basic and acidic residues. Residues 93 to 145 (RREQKGKKEASEQKKKDKDKKDCEEQDKSREEEDEDEERLDEEEQNEEEEVDN) are disordered. Ser-121 bears the Phosphoserine mark. A compositionally biased stretch (acidic residues) spans 124 to 145 (EEDEDEERLDEEEQNEEEEVDN).

In terms of assembly, component of the DNA polymerase epsilon complex consisting of four subunits: the catalytic subunit POLE and the accessory subunits POLE2, POLE3 and POLE4. Interaction with POLE4 is a prerequisite for further binding with POLE and POLE2. Heterodimer with CHRAC1; binds to DNA. Component of the CHRAC ISWI chromatin remodeling complex at least composed of SMARCA5/SNF2H, BAZ1A/ACF1, CHRAC1 and POLE3; the complex preferentially binds DNA through the CHRAC1-POLE3 heterodimer and possesses ATP-dependent nucleosome-remodeling activity. Within the complex, the heterodimer with CHRAC1 interacts with SMARCA5/SNF2H; the interaction is direct and enhances nucleosome sliding activity by the SMARCA5/SNF2H and BAZ1A/ACF1 interaction. Within the complex, the heterodimer with CHRAC1 interacts with BAZ1A/ACF1; the interactions are direct.

The protein resides in the nucleus. Functionally, accessory component of the DNA polymerase epsilon complex. Participates in DNA repair and in chromosomal DNA replication. Forms a complex with CHRAC1 and binds naked DNA, which is then incorporated into chromatin, aided by the nucleosome-remodeling activity of ISWI/SNF2H and ACF1. Does not enhance nucleosome sliding activity of the ACF-5 ISWI chromatin remodeling complex. The sequence is that of DNA polymerase epsilon subunit 3 (Pole3) from Rattus norvegicus (Rat).